We begin with the raw amino-acid sequence, 288 residues long: Phenazine biosynthesis-like domain-containing protein (288 aa).

Glutamate 46 is an active-site residue.

Belongs to the PhzF family. In terms of assembly, interacts with UNRIP/MAWD.

This chain is Phenazine biosynthesis-like domain-containing protein (PBLD), found in Pongo abelii (Sumatran orangutan).